A 280-amino-acid chain; its full sequence is Beta-glucosyl-HMC-alpha-glucosyl-transferase (280 aa).

Its pathway is genetic information processing; DNA modification. Functionally, transfers a gentiobiosyl-group on a hydroxymethylcytosine residue in DNA. Is involved in a DNA modification process to protects the phage genome against its own nucleases and the host restriction endonuclease system. The protein is Beta-glucosyl-HMC-alpha-glucosyl-transferase of Enterobacteria phage T6 (Bacteriophage T6).